The sequence spans 184 residues: Putative manganese efflux pump MntP (184 aa).

The next 6 membrane-spanning stretches (helical) occupy residues 3 to 23 (LLSM…ISVS), 36 to 56 (ALIS…LGWV), 65 to 85 (VSAL…LKMI), 103 to 123 (LLVL…SFAL), 126 to 146 (ISIW…SLAG), and 163 to 183 (ALGG…NVSF).

Belongs to the MntP (TC 9.B.29) family.

The protein localises to the cell membrane. Its function is as follows. Probably functions as a manganese efflux pump. The polypeptide is Putative manganese efflux pump MntP (Methanothermobacter thermautotrophicus (strain ATCC 29096 / DSM 1053 / JCM 10044 / NBRC 100330 / Delta H) (Methanobacterium thermoautotrophicum)).